A 102-amino-acid chain; its full sequence is PqqA binding protein (102 aa).

The protein belongs to the PqqD family. As to quaternary structure, monomer. Interacts with PqqE.

The protein operates within cofactor biosynthesis; pyrroloquinoline quinone biosynthesis. Its function is as follows. Functions as a PqqA binding protein and presents PqqA to PqqE, in the pyrroloquinoline quinone (PQQ) biosynthetic pathway. This Rhodopseudomonas palustris (strain ATCC BAA-98 / CGA009) protein is PqqA binding protein.